Here is a 356-residue protein sequence, read N- to C-terminus: Heat-inducible transcription repressor HrcA (356 aa).

This sequence belongs to the HrcA family.

Functionally, negative regulator of class I heat shock genes (grpE-dnaK-dnaJ and groELS operons). Prevents heat-shock induction of these operons. This Chlorobaculum tepidum (strain ATCC 49652 / DSM 12025 / NBRC 103806 / TLS) (Chlorobium tepidum) protein is Heat-inducible transcription repressor HrcA.